The primary structure comprises 266 residues: Gap junction beta-4 protein (266 aa).

The stretch at 2–13 (NWGFLQGILSGV) is an intramembrane region. The Cytoplasmic portion of the chain corresponds to 14–20 (NKYSTAL). A helical transmembrane segment spans residues 21–40 (GRIWLSVVFIFRVLVYVVAA). At 41 to 73 (EEVWDDDQKDFICNTKQPGCPNVCYDEFFPVSH) the chain is on the extracellular side. 3 disulfides stabilise this stretch: C53–C175, C60–C169, and C64–C164. Residues 74-94 (VRLWALQLILVTCPSLLVVMH) traverse the membrane as a helical segment. Topologically, residues 95-130 (VAYREERERKHRLKHGPNAPALYSNLSKKRGGLWWT) are cytoplasmic. A helical transmembrane segment spans residues 131 to 151 (YLLSLIFKAAVDSGFLYIFHC). Over 152–184 (IYKDYDMPRVVACSVTPCPHTVDCYIARPTEKK) the chain is Extracellular. A helical transmembrane segment spans residues 185-205 (VFTYFMVVTAAICILLNLSEV). Residues 206–266 (VYLVGKRCME…MATVDAGVYP (61 aa)) lie on the Cytoplasmic side of the membrane.

It belongs to the connexin family. Beta-type (group I) subfamily. As to quaternary structure, a hemichannel or connexon is composed of a hexamer of connexins. A functional gap junction is formed by the apposition of two hemichannels. Forms heteromeric channels with GJB2. Detected in cochlea (at protein level). Detected in cochlea. Expressed in skin.

The protein resides in the cell membrane. The protein localises to the cell junction. Its subcellular location is the gap junction. Its function is as follows. Structural component of gap junctions. Gap junctions are dodecameric channels that connect the cytoplasm of adjoining cells. They are formed by the docking of two hexameric hemichannels, one from each cell membrane. Small molecules and ions diffuse from one cell to a neighboring cell via the central pore. This Mus musculus (Mouse) protein is Gap junction beta-4 protein (Gjb4).